A 611-amino-acid polypeptide reads, in one-letter code: Procollagen galactosyltransferase 1-B (611 aa).

A signal peptide spans 1–24 (MSQAGVERLLKGLQILVLVLRLSA). N-linked (GlcNAc...) asparagine glycans are attached at residues Asn85, Asn173, Asn370, Asn373, and Asn568. Positions 576–591 (DRAKSRKTHQQEKLRS) are enriched in basic and acidic residues. A disordered region spans residues 576–611 (DRAKSRKTHQQEKLRSEALNTPSMGSPFDNTARDEL). The short motif at 608–611 (RDEL) is the Prevents secretion from ER element.

Belongs to the glycosyltransferase 25 family.

It localises to the endoplasmic reticulum lumen. The catalysed reaction is (5R)-5-hydroxy-L-lysyl-[collagen] + UDP-alpha-D-galactose = (5R)-5-O-(beta-D-galactosyl)-5-hydroxy-L-lysyl-[collagen] + UDP + H(+). Functionally, beta-galactosyltransferase that transfers beta-galactose to hydroxylysine residues of type I collagen. By acting on collagen glycosylation, facilitates the formation of collagen triple helix. This chain is Procollagen galactosyltransferase 1-B (colgalt1-b), found in Xenopus laevis (African clawed frog).